We begin with the raw amino-acid sequence, 395 residues long: E3 ubiquitin-protein ligase RNFT1 (395 aa).

Disordered stretches follow at residues 1 to 58 (MQAS…SSRN) and 78 to 97 (YSHS…GEHG). A run of 6 helical transmembrane segments spans residues 118–138 (ILIL…LGIG), 165–185 (CAWL…TFHS), 193–213 (IFLN…IVGI), 216–236 (FILK…PSFI), 258–278 (IFVP…FGNV), and 283–303 (LGIL…FGHL). Positions 328–379 (CSDMDGICTICQAEFQKPVLLFCQHIFCEECITLWFNREKTCPLCRTVISEC) are required for ubiquitin ligase activity and for protection against ER stress-induced cell death. The segment at 335–373 (CTICQAEFQKPVLLFCQHIFCEECITLWFNREKTCPLCR) adopts an RING-type zinc-finger fold.

In terms of tissue distribution, predominantly expressed in testis.

The protein resides in the early endosome membrane. The enzyme catalyses S-ubiquitinyl-[E2 ubiquitin-conjugating enzyme]-L-cysteine + [acceptor protein]-L-lysine = [E2 ubiquitin-conjugating enzyme]-L-cysteine + N(6)-ubiquitinyl-[acceptor protein]-L-lysine.. Its pathway is protein modification; protein ubiquitination. Its function is as follows. E3 ubiquitin-protein ligase that acts in the endoplasmic reticulum (ER)-associated degradation (ERAD) pathway, which targets misfolded proteins that accumulate in the endoplasmic reticulum (ER) for ubiquitination and subsequent proteasome-mediated degradation. Protects cells from ER stress-induced apoptosis. This chain is E3 ubiquitin-protein ligase RNFT1 (Rnft1), found in Mus musculus (Mouse).